The primary structure comprises 363 residues: Cytochrome b (363 aa).

Transmembrane regions (helical) follow at residues phenylalanine 23 to phenylalanine 43, tryptophan 67 to methionine 89, serine 102 to valine 122, and phenylalanine 164 to tyrosine 184. Heme b contacts are provided by histidine 73 and histidine 87. Residues histidine 168 and histidine 182 each contribute to the heme b site. Histidine 187 provides a ligand contact to a ubiquinone. 4 consecutive transmembrane segments (helical) span residues valine 210 to glycine 230, valine 271 to leucine 291, valine 310 to lysine 330, and valine 332 to isoleucine 352.

This sequence belongs to the cytochrome b family. As to quaternary structure, the main subunits of complex b-c1 are: cytochrome b, cytochrome c1 and the Rieske protein. The cofactor is heme b.

The protein resides in the mitochondrion inner membrane. In terms of biological role, component of the ubiquinol-cytochrome c reductase complex (complex III or cytochrome b-c1 complex) that is part of the mitochondrial respiratory chain. The b-c1 complex mediates electron transfer from ubiquinol to cytochrome c. Contributes to the generation of a proton gradient across the mitochondrial membrane that is then used for ATP synthesis. The sequence is that of Cytochrome b (MT-CYB) from Theileria annulata.